Consider the following 116-residue polypeptide: Phosphoribosyl-AMP cyclohydrolase (116 aa).

Asp82 provides a ligand contact to Mg(2+). Cys83 is a Zn(2+) binding site. Mg(2+) contacts are provided by Asp84 and Asp86. Residues Cys99 and Cys106 each coordinate Zn(2+).

The protein belongs to the PRA-CH family. In terms of assembly, homodimer. Mg(2+) is required as a cofactor. It depends on Zn(2+) as a cofactor.

It is found in the cytoplasm. It carries out the reaction 1-(5-phospho-beta-D-ribosyl)-5'-AMP + H2O = 1-(5-phospho-beta-D-ribosyl)-5-[(5-phospho-beta-D-ribosylamino)methylideneamino]imidazole-4-carboxamide. It functions in the pathway amino-acid biosynthesis; L-histidine biosynthesis; L-histidine from 5-phospho-alpha-D-ribose 1-diphosphate: step 3/9. In terms of biological role, catalyzes the hydrolysis of the adenine ring of phosphoribosyl-AMP. This is Phosphoribosyl-AMP cyclohydrolase from Saccharopolyspora erythraea (strain ATCC 11635 / DSM 40517 / JCM 4748 / NBRC 13426 / NCIMB 8594 / NRRL 2338).